The sequence spans 23 residues: EWCGTNSDCGEGECCTGGSFNRH.

Expressed by the venom gland.

The protein localises to the secreted. The protein is U22-ctenitoxin-Co1a of Ctenus ornatus (Brazilian spider).